The following is a 268-amino-acid chain: Dioscorin DB3S (268 aa).

One can recognise an Alpha-carbonic anhydrase domain in the interval 25–259 (DEFSYIEGNP…TNFRSVFYFE (235 aa)). An intrachain disulfide couples Cys50 to Cys209. The Proton acceptor role is filled by His91. L-ascorbate contacts are provided by residues Asp92, 117-119 (HFH), Gln136, and 205-206 (TA).

Belongs to the alpha-class carbonic anhydrase family. Monomer. Homodimer. Post-translationally, not glycosylated. As to expression, expressed in tuber (at protein level).

The enzyme catalyses hydrogencarbonate + H(+) = CO2 + H2O. It carries out the reaction 2 monodehydro-L-ascorbate radical + NADH + H(+) = 2 L-ascorbate + NAD(+). Storage protein of tuber. Involved in protection against oxidative stress. Has carbonate dehydratase and weak trypsin inhibitor activity detected by measuring the dehydration of sodium bicarbonate and the inhibition of trypsin-catalyzed hydrolysis of N-benzoyl-L-arginine-4-nitro anilide, respectively. Contrarily, no carbonate dehydratase or trypsin inhibitor activity detected by measuring the hydrolysis of 4-nitrophenyl acetate or the inhibition of bovine trypsin-catalyzed hydrolysis of N-benzoyl-L-arginine ethyl ester, respectively. Has dehydroascorbate (DHA) reductase and monodehydroascorbate (MDA) reductase activities. Catalyzes the reactions of carbonate dehydratase and DHA reductase independently of zinc and glutathione (GSH). The coupled reaction is capable of recycling a plant antioxidant ascorbate using ubiquitous compounds H(2)O and CO(2). Exhibits antioxidant activity. Able to scavenge 1,1-diphenyl-2-picrylhydrazyl (DPPH) radical and hydroxyl radicals. Exhibits immunomodulatory activity. Activates Toll-like receptor 4 signaling pathways by up-regulating the gene expression of pro-inflammatory cytokines, such as tumor necrosis factor alpha, interleukin-1 beta and interleukin-6, and chemokines RANTES and MCP-1, in mouse RAW 264.7 macrophages. Stimulates the phagocytosis of E.coli by the LPS-treated mouse macrophages. The chain is Dioscorin DB3S from Dioscorea polystachya (Chinese yam).